We begin with the raw amino-acid sequence, 1251 residues long: Cyclic nucleotide-gated channel beta-1 (1251 aa).

Disordered regions lie at residues 1-75 (MLGW…QETK), 121-151 (ITED…EAQD), 172-252 (QPPK…TRDP), and 314-561 (EDAH…STNS). The Cytoplasmic portion of the chain corresponds to 1 to 656 (MLGWVQRVLP…SIDPLTNLMY (656 aa)). Acidic residues predominate over residues 23–50 (EEEEVEPEPEMEAEVEPEPNPEEAETES). Residues 238–247 (GSQAQTSSLP) are compositionally biased toward polar residues. Positions 335-352 (EENKAVEKMPRELSRIEE) are enriched in basic and acidic residues. The segment covering 353–373 (EKEDEEEEEEEEEEEEEEEVT) has biased composition (acidic residues). Over residues 404–423 (KLWEEVGEEAKKEAEEKAKE) the composition is skewed to basic and acidic residues. The segment covering 424 to 434 (EAEEVAEEEAE) has biased composition (acidic residues). Basic and acidic residues predominate over residues 435-446 (KEPQDWAETKEE). Residues 557–567 (ASTNSAIINDR) are calmodulin-binding CaM1. The short motif at 568–578 (LQELVKLFKER) is the IQ-like element. The tract at residues 585–619 (KLIDPDVTSDEESPKPSPAKKAPEPAPDTKPAEAE) is disordered. Residues 657-678 (VLWLFFVVMAWNWNCWLIPVRW) traverse the membrane as a helical segment. Topologically, residues 679–687 (AFPYQTPDN) are extracellular. The helical transmembrane segment at 688–709 (IHHWLLMDYLCDLIYFLDITVF) threads the bilayer. At 710–724 (QTRLQFVRGGDIITD) the chain is on the cytoplasmic side. The helical transmembrane segment at 725–744 (KKDMRNNYLKSRRFKMDLLS) threads the bilayer. Topologically, residues 745 to 760 (LLPLDFLYLKVGVNPL) are extracellular. A helical transmembrane segment spans residues 761–773 (LRLPRCLKYMAFF). Over 774-785 (EFNSRLESILSK) the chain is Cytoplasmic. Residues 786–808 (AYVYRVIRTTAYLLYSLHLNSCL) form a helical membrane-spanning segment. An ion conduction pathway region spans residues 786-885 (AYVYRVIRTT…IGQMRDVVGA (100 aa)). The Extracellular segment spans residues 809–831 (YYWASAYQGLGSTHWVYDGVGNS). The next 2 helical transmembrane spans lie at 832–858 (YIRC…LFEI) and 859–884 (VFQL…DVVG). Residues 885 to 1251 (AATAGQTYYR…MPEEREEKAE (367 aa)) are Cytoplasmic-facing. Positions 888-964 (AGQTYYRSCM…NIVSKVALFQ (77 aa)) are C-linker. Residues 968 to 1084 (RQMIFDMLKR…LLRKKARRML (117 aa)) are cyclic nucleotide-binding domain. Residues Gly1029, Glu1030, Ser1032, Arg1042, and Thr1043 each coordinate 3',5'-cyclic GMP. Residue Arg1042 participates in 3',5'-cyclic AMP binding. The interval 1148 to 1154 (QQELVEQ) is calmodulin-binding CaM2. The segment at 1151–1251 (LVEQAKSSQD…MPEEREEKAE (101 aa)) is disordered. Pro residues predominate over residues 1183–1203 (PPAPRTPPEPPGSPPSSPPPA). The segment covering 1242-1251 (MPEEREEKAE) has biased composition (basic and acidic residues).

It belongs to the cyclic nucleotide-gated cation channel (TC 1.A.1.5) family. CNGB1 subfamily. The rod cyclic nucleotide-gated channel is a heterotetramer composed of CNGA1 and CNGB1 subunits with 3:1 stoichiometry. CNGA1:CNGB1 channel binds Ca(2+)-bound CALM1 via CaM1 and CaM2 regions of the CNGB1 subunit; this interaction modulates the affinity of the channel for cNMPs in response to intracellular Ca(2+) levels. The olfactory cyclic nucleotide-gated channel is a heterotetramer composed of CNGA2, CNGA4 and CNGB1 subunits with 2:1:1 stoichiometry.

The protein localises to the cell membrane. The protein resides in the cell projection. It localises to the cilium membrane. It carries out the reaction Ca(2+)(in) = Ca(2+)(out). The enzyme catalyses Na(+)(in) = Na(+)(out). The catalysed reaction is K(+)(in) = K(+)(out). It catalyses the reaction NH4(+)(in) = NH4(+)(out). It carries out the reaction Rb(+)(in) = Rb(+)(out). The enzyme catalyses Li(+)(in) = Li(+)(out). The catalysed reaction is Cs(+)(in) = Cs(+)(out). Pore-forming subunit of the rod cyclic nucleotide-gated channel. Mediates rod photoresponses at dim light converting transient changes in intracellular cGMP levels into electrical signals. In the dark, cGMP levels are high and keep the channel open enabling a steady inward current carried by Na(+) and Ca(2+) ions that leads to membrane depolarization and neurotransmitter release from synaptic terminals. Upon photon absorption cGMP levels decline leading to channel closure and membrane hyperpolarization that ultimately slows neurotransmitter release and signals the presence of light, the end point of the phototransduction cascade. Pore-forming subunit of the olfactory cyclic nucleotide-gated channel. Operates in the cilia of olfactory sensory neurons where chemical stimulation of the odorant is converted to an electrical signal. Mediates odorant-induced cAMP-dependent Ca(2+) influx triggering neuron depolarization. The rise of intracellular Ca(2+) levels potentiates the olfactory response by activating Ca(2+)-dependent Cl(-) channels, but it also serves as a negative feedback signal to desensitize the channel for rapid adaptation to odorants. Conducts cGMP- and cAMP-gated ion currents, with permeability for monovalent and divalent cations. The selectivity for Ca(2+) over Na(+) increases with cGMP concentrations, whereas the selectivity among monovalent ions is independent of the cGMP levels. Its function is as follows. High affinity rod photoreceptor phosphodiesterase (PDE6)-binding protein that modulates its catalytic properties: it is a regulator of spontaneous activation of rod PDE6, thereby serving to lower rod photoreceptor 'dark noise' and allowing these sensory cells to operate at the single photon detection limit. This Homo sapiens (Human) protein is Cyclic nucleotide-gated channel beta-1.